Consider the following 184-residue polypeptide: Cyclin-dependent kinase inhibitor 1 (184 aa).

The segment covering 85–98 has biased composition (low complexity); it reads ISSTTLTPLSSPST. Positions 85-184 are disordered; the sequence is ISSTTLTPLS…IRTRSSCSPY (100 aa).

Belongs to the CDI family. In terms of assembly, interacts with cyd-1; the interaction is direct. In embryos, expression is first seen in pharyngeal primordium and later in all differentiating cells. Post embryonic expression corresponds to developmental patterns of cell cycle progression in many tissues including sex myoblasts, distal tip cells, vulval cells, seam cells, neurons, intestine cells and hypodermal cells.

It is found in the nucleus. Its function is as follows. Negative cell-cycle regulator that functions at the G1-to-S-phase transition. Required for suspension of the cell cycle in dauer larvae and starved L1 larvae. In vulval precursor cells (VPCs), a pathway of heterochronic genes acts via cki-1 to maintain VPCs in G1 during the L2 larval stage. Cul-2 may function in ubiquitin-mediated degradation by targeting cki-1 for degradation. Involved in distal tip cell development by repressing and modulating cye-1/cdk-2 activity levels in Z1.aa/Z4.pp and in Z1.ap/Z4.pa. This is Cyclin-dependent kinase inhibitor 1 from Caenorhabditis elegans.